The chain runs to 395 residues: MDPTKAPDFKPPQPNEELQPPPDPTHTIPKSGPIVPYVLADYNSSIDAPFNLDIYKTLSSRKKNANSSNRMDHIPLNTSDFQPLSRDVSSEEESEGQSNGIDATLQDVTMTGNLGVLKSQIADLEEVPHTIVRQARTIEDYEFPVHRLTKKLQDPEKLPLIIVACGSFSPITYLHLRMFEMALDDINEQTRFEVVGGYFSPVSDNYQKRGLAPAYHRVRMCELACERTSSWLMVDAWESLQSSYTRTAKVLDHFNHEINIKRGGIMTVDGEKMGVKIMLLAGGDLIESMGEPHVWADSDLHHILGNYGCLIVERTGSDVRSFLLSHDIMYEHRRNILIIKQLIYNDISSTKVRLFIRRGMSVQYLLPNSVIRYIQEYNLYINQSEPVKQVLDSKE.

Disordered stretches follow at residues 1 to 34 and 62 to 102; these read MDPT…SGPI and KKNA…NGID. A compositionally biased stretch (pro residues) spans 9–24; sequence FKPPQPNEELQPPPDP. A phosphoserine mark is found at serine 85, serine 89, and serine 90. NAD(+) is bound by residues serine 167 and phenylalanine 168. Residues histidine 175 and arginine 209 each contribute to the ATP site. NAD(+) is bound by residues threonine 247, glycine 282, aspartate 284, tryptophan 295, arginine 314, and asparagine 345. Residue 350–353 participates in ATP binding; it reads TKVR.

It belongs to the eukaryotic NMN adenylyltransferase family. Co(2+) is required as a cofactor.

The protein resides in the nucleus. It carries out the reaction beta-nicotinamide D-ribonucleotide + ATP + H(+) = diphosphate + NAD(+). The enzyme catalyses nicotinate beta-D-ribonucleotide + ATP + H(+) = deamido-NAD(+) + diphosphate. It participates in cofactor biosynthesis; NAD(+) biosynthesis; deamido-NAD(+) from nicotinate D-ribonucleotide: step 1/1. Its pathway is cofactor biosynthesis; NAD(+) biosynthesis; NAD(+) from nicotinamide D-ribonucleotide: step 1/1. Its function is as follows. Catalyzes the formation of NAD(+) from nicotinamide mononucleotide (NMN) and ATP. Can also use the deamidated form; nicotinic acid mononucleotide (NaMN) as substrate to form deamido-NAD(+) (NaAD). Key enzyme in both de novo and salvage pathways for NAD(+) biosynthesis. Predominantly acts in the salvage pathways via NMN. This Saccharomyces cerevisiae (strain ATCC 204508 / S288c) (Baker's yeast) protein is Nicotinamide/nicotinic acid mononucleotide adenylyltransferase 2.